Reading from the N-terminus, the 365-residue chain is MSEEREAPGPLASSSAGLGAEVGQEEVPGGAGPARLLLLPSDSDGPPKKRLRSEAEPGSVRLEERLYSVLCCTVCLDLPKASVYQCTNGHLMCAGCFIHLLADSRLKEEQATCPNCRCEISKSLCCRNLAVEKAVSELPSDCGFCLKQFPRSLLERHKKEECQDRVTQCKYKRIGCPWEGPYHELTVHESECCHPTKTGNELMEILDEMDQTHKKEMQLYNSIFSLLSFEKIGYTEVQFRPYRTDDFITRLYYETPRFTVLNQTWVLKARVNDSERNPNLSCKRTLSFQLILKSKINSPMECSFLLLKGPYDDVKIHPVIYHFVFTNENNETEYVPLPIIDSVECNKLLAAKNINLRLFIFQIQK.

Residues 1-56 (MSEEREAPGPLASSSAGLGAEVGQEEVPGGAGPARLLLLPSDSDGPPKKRLRSEAE) form a disordered region. An RING-type; degenerate zinc finger spans residues 72-117 (CTVCLDLPKASVYQCTNGHLMCAGCFIHLLADSRLKEEQATCPNCR). The segment at 113 to 186 (CPNCRCEISK…PWEGPYHELT (74 aa)) adopts a TRAF-type zinc-finger fold.

This sequence belongs to the ZFTRAF1 family.

The protein localises to the cytoplasm. In Xenopus laevis (African clawed frog), this protein is Zinc finger TRAF-type-containing protein 1-A.